A 201-amino-acid chain; its full sequence is Ras-related protein Rab-9A (201 aa).

An N-acetylalanine modification is found at alanine 2. Glycine 17 is a GDP binding site. 9 residues coordinate GTP: glycine 17, valine 18, glycine 19, lysine 20, serine 21, serine 22, threonine 34, histidine 38, and threonine 39. 4 residues coordinate GDP: glycine 19, lysine 20, serine 21, and serine 22. Serine 21 serves as a coordination point for Mg(2+). Residues lysine 31–valine 42 carry the Switch 1 motif. The Mg(2+) site is built by threonine 39 and aspartate 62. The short motif at alanine 64–arginine 78 is the Switch 2 element. 4 residues coordinate GTP: glycine 65, asparagine 124, lysine 125, and aspartate 127. Positions 124, 125, 127, 155, and 156 each coordinate GDP. Residue lysine 156 participates in GTP binding. Serine 179 is subject to Phosphoserine. Threonine 187 is modified (phosphothreonine). Residues cysteine 200 and cysteine 201 are each lipidated (S-geranylgeranyl cysteine).

It belongs to the small GTPase superfamily. Rab family. As to quaternary structure, interacts (preferentially in its GTP-bound form) with GCC2 (via its GRIP domain). Interacts (GTP-bound form) with SGSM1; the GDP-bound form has much lower affinity for SGSM1. Interacts with SGSM2. The GTP-bound form but not the GDP-bound form interacts with HPS4 and the BLOC-3 complex (heterodimer of HPS1 and HPS4) but does not interact with HPS1 alone. Interacts (GTP-bound form) with NDE1; two RAB9A-GTP molecules lie on the opposite sides of the NDE1 homodimer; the interaction leads to RAB9A-dynein motor tethering. Interacts (GTP-bound form) with NDEL1. It depends on Mg(2+) as a cofactor.

It is found in the cell membrane. The protein resides in the endoplasmic reticulum membrane. The protein localises to the golgi apparatus membrane. It localises to the late endosome. Its subcellular location is the cytoplasmic vesicle. It is found in the phagosome membrane. The protein resides in the phagosome. The protein localises to the cytoplasmic vesicle membrane. It localises to the melanosome. It catalyses the reaction GTP + H2O = GDP + phosphate + H(+). Its activity is regulated as follows. Regulated by guanine nucleotide exchange factors (GEFs) which promote the exchange of bound GDP for free GTP. Regulated by GTPase activating proteins (GAPs) which increase the GTP hydrolysis activity. Inhibited by GDP dissociation inhibitors (GDIs). Functionally, the small GTPases Rab are key regulators of intracellular membrane trafficking, from the formation of transport vesicles to their fusion with membranes. Rabs cycle between an inactive GDP-bound form and an active GTP-bound form that is able to recruit to membranes different sets of downstream effectors directly responsible for vesicle formation, movement, tethering and fusion. RAB9A is involved in the transport of proteins between the endosomes and the trans-Golgi network (TGN). Specifically uses NDE1/NDEL1 as an effector to interact with the dynein motor complex in order to control retrograde trafficking of RAB9-associated late endosomes to the TGN. Involved in the recruitment of SGSM2 to melanosomes and is required for the proper trafficking of melanogenic enzymes TYR, TYRP1 and DCT/TYRP2 to melanosomes in melanocytes. In Canis lupus familiaris (Dog), this protein is Ras-related protein Rab-9A (RAB9A).